Reading from the N-terminus, the 166-residue chain is NAD(P)H-quinone oxidoreductase subunit I, chloroplastic (166 aa).

4Fe-4S ferredoxin-type domains follow at residues 55 to 84 and 95 to 124; these read GRIHFEFDKCIACEVCVRVCPIDLPVVDWK and LNYSIDFGICIFCGNCVEYCPTNCLSMTEE. 8 residues coordinate [4Fe-4S] cluster: C64, C67, C70, C74, C104, C107, C110, and C114.

It belongs to the complex I 23 kDa subunit family. As to quaternary structure, NDH is composed of at least 16 different subunits, 5 of which are encoded in the nucleus. Requires [4Fe-4S] cluster as cofactor.

Its subcellular location is the plastid. It localises to the chloroplast thylakoid membrane. It carries out the reaction a plastoquinone + NADH + (n+1) H(+)(in) = a plastoquinol + NAD(+) + n H(+)(out). The catalysed reaction is a plastoquinone + NADPH + (n+1) H(+)(in) = a plastoquinol + NADP(+) + n H(+)(out). In terms of biological role, NDH shuttles electrons from NAD(P)H:plastoquinone, via FMN and iron-sulfur (Fe-S) centers, to quinones in the photosynthetic chain and possibly in a chloroplast respiratory chain. The immediate electron acceptor for the enzyme in this species is believed to be plastoquinone. Couples the redox reaction to proton translocation, and thus conserves the redox energy in a proton gradient. The protein is NAD(P)H-quinone oxidoreductase subunit I, chloroplastic of Hulsea algida (Pacific hulsea).